We begin with the raw amino-acid sequence, 525 residues long: Bifunctional purine biosynthesis protein PurH (525 aa).

Positions 1–149 constitute an MGS-like domain; the sequence is MSDPVIKRAL…KNHESVTVIT (149 aa).

Belongs to the PurH family.

The enzyme catalyses (6R)-10-formyltetrahydrofolate + 5-amino-1-(5-phospho-beta-D-ribosyl)imidazole-4-carboxamide = 5-formamido-1-(5-phospho-D-ribosyl)imidazole-4-carboxamide + (6S)-5,6,7,8-tetrahydrofolate. It carries out the reaction IMP + H2O = 5-formamido-1-(5-phospho-D-ribosyl)imidazole-4-carboxamide. It participates in purine metabolism; IMP biosynthesis via de novo pathway; 5-formamido-1-(5-phospho-D-ribosyl)imidazole-4-carboxamide from 5-amino-1-(5-phospho-D-ribosyl)imidazole-4-carboxamide (10-formyl THF route): step 1/1. Its pathway is purine metabolism; IMP biosynthesis via de novo pathway; IMP from 5-formamido-1-(5-phospho-D-ribosyl)imidazole-4-carboxamide: step 1/1. In Chlorobium phaeobacteroides (strain BS1), this protein is Bifunctional purine biosynthesis protein PurH.